The primary structure comprises 2185 residues: Genome polyprotein (2185 aa).

The N-myristoyl glycine; by host moiety is linked to residue Gly2. Over 2–1495 (GAQVSTQKTG…HVSRAFICLQ (1494 aa)) the chain is Cytoplasmic. An amphipathic alpha-helix region spans residues 566–582 (FYQGPPGEAVERAIARV). Residues His872 and Asp890 each act as for protease 2A activity in the active site. The Zn(2+) site is built by Cys907 and Cys909. Cys961 serves as the catalytic For protease 2A activity. Cys967 and His969 together coordinate Zn(2+). The membrane-binding stretch occupies residues 1101-1173 (NNNWLKKFTE…EQSAPSQSDQ (73 aa)). The oligomerization stretch occupies residues 1101-1239 (NNNWLKKFTE…SPGAGKSVAT (139 aa)). The segment at 1122 to 1126 (AVKIQ) is RNA-binding. The SF3 helicase domain occupies 1205 to 1361 (EKKMSNYIQF…SMYSQNGKIN (157 aa)). Residues Cys1369, Cys1381, and Cys1386 each coordinate Zn(2+). The segment at 1369 to 1386 (CDEECCPVNFKRCCPLVC) adopts a C4-type; degenerate zinc-finger fold. The tract at residues 1413 to 1420 (EYNHRHSV) is RNA-binding. The tract at residues 1424–1429 (LEALFQ) is oligomerization. Residues 1496 to 1511 (ALTTFVSVAGIIYIIY) lie within the membrane without spanning it. Over 1512 to 2185 (KLFAGFQGAY…TLRRKWLDSF (674 aa)) the chain is Cytoplasmic. At Tyr1521 the chain carries O-(5'-phospho-RNA)-tyrosine. The Peptidase C3 domain maps to 1541 to 1719 (GPAFEFAVAM…FSAALLKHYF (179 aa)). Active-site for protease 3C activity residues include His1580, Glu1611, and Cys1687. Residues 1950 to 2066 (GHLIAFDYSG…SYPWPIDASL (117 aa)) form the RdRp catalytic domain. Mg(2+)-binding residues include Asp1956 and Asp2052.

It belongs to the picornaviruses polyprotein family. As to quaternary structure, interacts with capsid protein VP1 and capsid protein VP3 to form heterotrimeric protomers. Interacts with capsid protein VP0, and capsid protein VP3 to form heterotrimeric protomers. Five protomers subsequently associate to form pentamers which serve as building blocks for the capsid. Interacts with capsid protein VP2, capsid protein VP3 and capsid protein VP4 following cleavage of capsid protein VP0. In terms of assembly, interacts with capsid protein VP1 and capsid protein VP3 in the mature capsid. As to quaternary structure, interacts with capsid protein VP0 and capsid protein VP1 to form heterotrimeric protomers. Five protomers subsequently associate to form pentamers which serve as building blocks for the capsid. Interacts with capsid protein VP4 in the mature capsid. Interacts with protein 2C; this interaction may be important for virion morphogenesis. Interacts with capsid protein VP1 and capsid protein VP3. In terms of assembly, homodimer. As to quaternary structure, homohexamer; forms a hexameric ring structure with 6-fold symmetry characteristic of AAA+ ATPases. Interacts (via N-terminus) with host RTN3 (via reticulon domain); this interaction is important for viral replication. Interacts with capsid protein VP3; this interaction may be important for virion morphogenesis. Interacts with protein 3CD. In terms of assembly, homodimer. Interacts with host GBF1. Interacts (via GOLD domain) with host ACBD3 (via GOLD domain); this interaction allows the formation of a viral protein 3A/ACBD3 heterotetramer with a 2:2 stoichiometry, which will stimulate the recruitment of host PI4KB in order to synthesize PI4P at the viral RNA replication sites. As to quaternary structure, interacts with RNA-directed RNA polymerase. Interacts with protein 3AB and with RNA-directed RNA polymerase. In terms of assembly, interacts with Viral protein genome-linked and with protein 3CD. Mg(2+) is required as a cofactor. In terms of processing, specific enzymatic cleavages in vivo by the viral proteases yield processing intermediates and the mature proteins. Post-translationally, myristoylation is required for the formation of pentamers during virus assembly. Further assembly of 12 pentamers and a molecule of genomic RNA generates the provirion. During virion maturation, immature virions are rendered infectious following cleavage of VP0 into VP4 and VP2. This maturation seems to be an autocatalytic event triggered by the presence of RNA in the capsid and it is followed by a conformational change infectious virion. In terms of processing, myristoylation is required during RNA encapsidation and formation of the mature virus particle. Post-translationally, VPg is uridylylated by the polymerase into VPg-pUpU. This acts as a nucleotide-peptide primer for the genomic RNA replication.

It localises to the virion. It is found in the host cytoplasm. Its subcellular location is the host cytoplasmic vesicle membrane. The protein localises to the host nucleus. The enzyme catalyses a ribonucleoside 5'-triphosphate + H2O = a ribonucleoside 5'-diphosphate + phosphate + H(+). It catalyses the reaction Selective cleavage of Tyr-|-Gly bond in the picornavirus polyprotein.. It carries out the reaction RNA(n) + a ribonucleoside 5'-triphosphate = RNA(n+1) + diphosphate. The catalysed reaction is Selective cleavage of Gln-|-Gly bond in the poliovirus polyprotein. In other picornavirus reactions Glu may be substituted for Gln, and Ser or Thr for Gly.. With respect to regulation, replication or transcription is subject to high level of random mutations by the nucleotide analog ribavirin. Its function is as follows. Forms an icosahedral capsid of pseudo T=3 symmetry with capsid proteins VP2 and VP3. The capsid is 300 Angstroms in diameter, composed of 60 copies of each capsid protein and enclosing the viral positive strand RNA genome. Capsid protein VP1 mainly forms the vertices of the capsid. Capsid protein VP1 interacts with host cell receptor to provide virion attachment to target host cells. This attachment induces virion internalization. Tyrosine kinases are probably involved in the entry process. After binding to its receptor, the capsid undergoes conformational changes. Capsid protein VP1 N-terminus (that contains an amphipathic alpha-helix) and capsid protein VP4 are externalized. Together, they shape a pore in the host membrane through which viral genome is translocated to host cell cytoplasm. Forms an icosahedral capsid of pseudo T=3 symmetry with capsid proteins VP2 and VP3. The capsid is 300 Angstroms in diameter, composed of 60 copies of each capsid protein and enclosing the viral positive strand RNA genome. In terms of biological role, lies on the inner surface of the capsid shell. After binding to the host receptor, the capsid undergoes conformational changes. Capsid protein VP4 is released, Capsid protein VP1 N-terminus is externalized, and together, they shape a pore in the host membrane through which the viral genome is translocated into the host cell cytoplasm. Functionally, component of immature procapsids, which is cleaved into capsid proteins VP4 and VP2 after maturation. Allows the capsid to remain inactive before the maturation step. Its function is as follows. Cysteine protease that cleaves viral polyprotein and specific host proteins. It is responsible for the autocatalytic cleavage between the P1 and P2 regions, which is the first cleavage occurring in the polyprotein. Also cleaves the host translation initiation factor EIF4G1, in order to shut down the capped cellular mRNA translation. Inhibits the host nucleus-cytoplasm protein and RNA trafficking by cleaving host members of the nuclear pores. Counteracts stress granule formation probably by antagonizing its assembly or promoting its dissassembly. Cleaves and inhibits host IFIH1/MDA5, thereby inhibiting the type-I IFN production and the establishment of the antiviral state. Cleaves and inhibits host MAVS, thereby inhibiting the type-I IFN production and the establishment of the antiviral state. Plays an essential role in the virus replication cycle by acting as a viroporin. Creates a pore in the host endoplasmic reticulum and as a consequence releases Ca2+ in the cytoplasm of infected cell. In turn, high levels of cytoplasmic calcium may trigger membrane trafficking and transport of viral ER-associated proteins to viroplasms, sites of viral genome replication. In terms of biological role, induces and associates with structural rearrangements of intracellular membranes. Displays RNA-binding, nucleotide binding and NTPase activities. May play a role in virion morphogenesis and viral RNA encapsidation by interacting with the capsid protein VP3. Functionally, localizes the viral replication complex to the surface of membranous vesicles. Together with protein 3CD binds the Cis-Active RNA Element (CRE) which is involved in RNA synthesis initiation. Acts as a cofactor to stimulate the activity of 3D polymerase, maybe through a nucleid acid chaperone activity. Its function is as follows. Localizes the viral replication complex to the surface of membranous vesicles. It inhibits host cell endoplasmic reticulum-to-Golgi apparatus transport and causes the disassembly of the Golgi complex, possibly through GBF1 interaction. This would result in depletion of MHC, trail receptors and IFN receptors at the host cell surface. Plays an essential role in viral RNA replication by recruiting ACBD3 and PI4KB at the viral replication sites, thereby allowing the formation of the rearranged membranous structures where viral replication takes place. Acts as a primer for viral RNA replication and remains covalently bound to viral genomic RNA. VPg is uridylylated prior to priming replication into VPg-pUpU. The oriI viral genomic sequence may act as a template for this. The VPg-pUpU is then used as primer on the genomic RNA poly(A) by the RNA-dependent RNA polymerase to replicate the viral genome. During genome replication, the VPg-RNA linkage is removed by the host TDP2, thereby accelerating replication. During the late stage of the replication cycle, host TDP2 is excluded from sites of viral RNA synthesis and encapsidation, allowing for the generation of progeny virions. In terms of biological role, involved in the viral replication complex and viral polypeptide maturation. It exhibits protease activity with a specificity and catalytic efficiency that is different from protease 3C. Protein 3CD lacks polymerase activity. Protein 3CD binds to the 5'UTR of the viral genome. Functionally, replicates the viral genomic RNA on the surface of intracellular membranes. May form linear arrays of subunits that propagate along a strong head-to-tail interaction called interface-I. Covalently attaches UMP to a tyrosine of VPg, which is used to prime RNA synthesis. The positive stranded RNA genome is first replicated at virus induced membranous vesicles, creating a dsRNA genomic replication form. This dsRNA is then used as template to synthesize positive stranded RNA genomes. ss(+)RNA genomes are either translated, replicated or encapsidated. Its function is as follows. Major viral protease that mediates proteolytic processing of the polyprotein. Cleaves host EIF5B, contributing to host translation shutoff. Also cleaves host PABPC1, contributing to host translation shutoff. Cleaves host NLRP1, triggers host N-glycine-mediated degradation of the autoinhibitory NLRP1 N-terminal fragment. In Homo sapiens (Human), this protein is Genome polyprotein.